We begin with the raw amino-acid sequence, 554 residues long: Solute carrier family 22 member 1 (554 aa).

The Cytoplasmic portion of the chain corresponds to methionine 1 to alanine 21. The chain crosses the membrane as a helical span at residues phenylalanine 22–leucine 42. Over glycine 43–aspartate 149 the chain is Extracellular. An N-linked (GlcNAc...) asparagine glycan is attached at asparagine 71. A helical membrane pass occupies residues leucine 150–alanine 170. Topologically, residues aspartate 171–lysine 176 are cytoplasmic. A helical membrane pass occupies residues leucine 177–proline 197. At asparagine 198–arginine 206 the chain is on the extracellular side. Residues leucine 207–glycine 229 form a helical membrane-spanning segment. At serine 230–threonine 235 the chain is on the cytoplasmic side. Residues valine 236–tyrosine 256 form a helical membrane-spanning segment. Residues alanine 257–arginine 262 lie on the Extracellular side of the membrane. The chain crosses the membrane as a helical span at residues tryptophan 263–proline 283. A Proline-rich sequence motif is present at residues proline 283–arginine 287. Residues glutamate 284–threonine 347 are Cytoplasmic-facing. Position 333 is a phosphoserine (serine 333). Residues phenylalanine 348–methionine 368 traverse the membrane as a helical segment. At glycine 369–tyrosine 376 the chain is on the extracellular side. Residues leucine 377–isoleucine 397 traverse the membrane as a helical segment. Topologically, residues aspartate 398–arginine 402 are cytoplasmic. Residues isoleucine 403–isoleucine 423 form a helical membrane-spanning segment. The Extracellular segment spans residues serine 424 to asparagine 431. Residues isoleucine 432–valine 452 form a helical membrane-spanning segment. Topologically, residues asparagine 453–leucine 464 are cytoplasmic. Residues glycine 465–phenylalanine 485 form a helical membrane-spanning segment. Residues arginine 486 to glutamine 492 lie on the Extracellular side of the membrane. Residues alanine 493–leucine 513 traverse the membrane as a helical segment. Residues proline 514 to threonine 554 are Cytoplasmic-facing. Threonine 541 carries the phosphothreonine modification.

The protein belongs to the major facilitator (TC 2.A.1) superfamily. Organic cation transporter (TC 2.A.1.19) family. Post-translationally, phosphorylated. Widely expressed with high level in liver. In liver, expressed around the central vein. Expressed in kidney. Expressed in small intestine enterocytes. Localized to peritubular myoid cells, Leydig cells and moderately to the basal membrane of Sertoli cells in testes. Expressed in tracheal and bronchial ciliated epithelium in the respiratory tract. Also expressed in skeletal muscle, stomach, spleen, heart, placentacolon, brain, granulycytes and lympohocytes. As to expression, expressed in liver and in glial cell lines. In terms of tissue distribution, expressed in glial cell lines. Not expressed in liver.

It localises to the basolateral cell membrane. The protein localises to the apical cell membrane. It is found in the lateral cell membrane. The protein resides in the basal cell membrane. Its subcellular location is the cell membrane. It catalyses the reaction 1-methylnicotinamide(out) = 1-methylnicotinamide(in). The catalysed reaction is dopamine(out) = dopamine(in). The enzyme catalyses serotonin(out) = serotonin(in). It carries out the reaction (R)-adrenaline(out) = (R)-adrenaline(in). It catalyses the reaction histamine(out) = histamine(in). The catalysed reaction is guanidine(out) = guanidine(in). The enzyme catalyses acetylcholine(in) = acetylcholine(out). It carries out the reaction thiamine(in) = thiamine(out). It catalyses the reaction agmatine(out) = agmatine(in). The catalysed reaction is putrescine(out) = putrescine(in). The enzyme catalyses spermidine(in) = spermidine(out). It carries out the reaction L-histidyl-L-proline diketopiperazine(in) = L-histidyl-L-proline diketopiperazine(out). It catalyses the reaction (R)-salsolinol(in) = (R)-salsolinol(out). The catalysed reaction is prostaglandin F2alpha(out) = prostaglandin F2alpha(in). The enzyme catalyses prostaglandin E2(out) = prostaglandin E2(in). Its activity is regulated as follows. Phosphorylation of the transporter leads to changes in its substrate affinity, resulting in a regulation of the transport activity. In contrast with rat ortholog, ASP uptake is inhibited by protein kinase A (PKA) and C (PKC) activation. ASP uptake is also endogenously activated by calmodulin, the calmodulin-dependent kinase II and LCK tyrosine kinase. Inhibited by cGMP, most likely through a cGMP-binding protein that interacts with OCT1. In terms of biological role, electrogenic voltage-dependent transporter that mediates the transport of a variety of organic cations such as endogenous bioactive amines, cationic drugs and xenobiotics. Functions as a pH- and Na(+)-independent, bidirectional transporter. Cation cellular uptake or release is driven by the electrochemical potential (i.e. membrane potential and concentration gradient) and substrate selectivity. Hydrophobicity is a major requirement for recognition in polyvalent substrates and inhibitors. Primarily expressed at the basolateral membrane of hepatocytes and proximal tubules and involved in the uptake and disposition of cationic compounds by hepatic and renal clearance from the blood flow. Most likely functions as an uptake carrier in enterocytes contributing to the intestinal elimination of organic cations from the systemic circulation. Transports endogenous monoamines such as N-1-methylnicotinamide (NMN), guanidine, histamine, neurotransmitters dopamine, serotonin and adrenaline. Also transports natural polyamines such as spermidine, agmatine and putrescine at low affinity, but relatively high turnover. Involved in the hepatic uptake of vitamin B1/thiamine, hence regulating hepatic lipid and energy metabolism. Mediates the bidirectional transport of acetylcholine (ACh) at the apical membrane of ciliated cell in airway epithelium, thereby playing a role in luminal release of ACh from bronchial epithelium. Transports dopaminergic neuromodulators cyclo(his-pro) and salsolinol with lower efficency. Also capable of transporting non-amine endogenous compounds such as prostaglandin E2 (PGE2) and prostaglandin F2-alpha (PGF2-alpha). May contribute to the transport of cationic compounds in testes across the blood-testis-barrier. Also involved in the uptake of xenobiotics tributylmethylammonium (TBuMA), quinidine, N-methyl-quinine (NMQ), N-methyl-quinidine (NMQD) N-(4,4-azo-n-pentyl)-quinuclidine (APQ), azidoprocainamide methoiodide (AMP), N-(4,4-azo-n-pentyl)-21-deoxyajmalinium (APDA) and 4-(4-(dimethylamino)styryl)-N-methylpyridinium (ASP). Functionally, mediates the uptake of 1-methyl-4-phenylpyridinium (MPP(+)). Not able to uptake 1-methyl-4-phenylpyridinium (MPP(+)). This chain is Solute carrier family 22 member 1, found in Homo sapiens (Human).